The following is a 263-amino-acid chain: Small ribosomal subunit protein eS4, Y isoform 2 (263 aa).

The 63-residue stretch at 42 to 104 (LPLIVFLRNR…TGEHFRLVYD (63 aa)) folds into the S4 RNA-binding domain.

The protein belongs to the eukaryotic ribosomal protein eS4 family.

The protein is Small ribosomal subunit protein eS4, Y isoform 2 (RPS4Y2) of Pan troglodytes (Chimpanzee).